The following is a 147-amino-acid chain: uncharacterized protein (147 aa).

One can recognise an HTH marR-type domain in the interval 11-147 (NTSPGFLLWQ…SGLQELLKHE (137 aa)). Positions 61–84 (QKKLASFSQTNIMMVSEVVRTLEK) form a DNA-binding region, H-T-H motif.

This is an uncharacterized protein from Bacillus subtilis (strain 168).